The following is a 142-amino-acid chain: Large ribosomal subunit protein uL16 (142 aa).

The protein belongs to the universal ribosomal protein uL16 family. Part of the 50S ribosomal subunit.

In terms of biological role, binds 23S rRNA and is also seen to make contacts with the A and possibly P site tRNAs. This chain is Large ribosomal subunit protein uL16, found in Aquifex aeolicus (strain VF5).